The chain runs to 513 residues: Maturase K (513 aa).

This sequence belongs to the intron maturase 2 family. MatK subfamily.

The protein localises to the plastid. Its subcellular location is the chloroplast. Usually encoded in the trnK tRNA gene intron. Probably assists in splicing its own and other chloroplast group II introns. The polypeptide is Maturase K (Phragmites australis (Common reed)).